The sequence spans 259 residues: Phosphoadenosine 5'-phosphosulfate reductase (259 aa).

The active-site Nucleophile; cysteine thiosulfonate intermediate is Cys244.

It belongs to the PAPS reductase family. CysH subfamily.

It is found in the cytoplasm. The catalysed reaction is [thioredoxin]-disulfide + sulfite + adenosine 3',5'-bisphosphate + 2 H(+) = [thioredoxin]-dithiol + 3'-phosphoadenylyl sulfate. The protein operates within sulfur metabolism; hydrogen sulfide biosynthesis; sulfite from sulfate: step 3/3. In terms of biological role, catalyzes the formation of sulfite from phosphoadenosine 5'-phosphosulfate (PAPS) using thioredoxin as an electron donor. This is Phosphoadenosine 5'-phosphosulfate reductase from Vibrio campbellii (strain ATCC BAA-1116).